A 211-amino-acid chain; its full sequence is NADH-quinone oxidoreductase subunit I 1 (211 aa).

2 4Fe-4S ferredoxin-type domains span residues 50–80 (LNRH…VEGA) and 96–125 (RVYQ…MTNE). [4Fe-4S] cluster contacts are provided by Cys60, Cys63, Cys66, Cys70, Cys105, Cys108, Cys111, and Cys115. The disordered stretch occupies residues 192 to 211 (QEGDSTFGATEPASEEVIRR).

It belongs to the complex I 23 kDa subunit family. NDH-1 is composed of 14 different subunits. Subunits NuoA, H, J, K, L, M, N constitute the membrane sector of the complex. Requires [4Fe-4S] cluster as cofactor.

The protein localises to the cell membrane. The catalysed reaction is a quinone + NADH + 5 H(+)(in) = a quinol + NAD(+) + 4 H(+)(out). Functionally, NDH-1 shuttles electrons from NADH, via FMN and iron-sulfur (Fe-S) centers, to quinones in the respiratory chain. The immediate electron acceptor for the enzyme in this species is believed to be ubiquinone. Couples the redox reaction to proton translocation (for every two electrons transferred, four hydrogen ions are translocated across the cytoplasmic membrane), and thus conserves the redox energy in a proton gradient. This is NADH-quinone oxidoreductase subunit I 1 from Streptomyces coelicolor (strain ATCC BAA-471 / A3(2) / M145).